The primary structure comprises 286 residues: Ribosomal RNA small subunit methyltransferase I (286 aa).

Belongs to the methyltransferase superfamily. RsmI family.

The protein resides in the cytoplasm. It catalyses the reaction cytidine(1402) in 16S rRNA + S-adenosyl-L-methionine = 2'-O-methylcytidine(1402) in 16S rRNA + S-adenosyl-L-homocysteine + H(+). In terms of biological role, catalyzes the 2'-O-methylation of the ribose of cytidine 1402 (C1402) in 16S rRNA. In Escherichia coli O157:H7, this protein is Ribosomal RNA small subunit methyltransferase I.